The primary structure comprises 129 residues: DNA-directed RNA polymerase III subunit rpc9 (129 aa).

The protein belongs to the eukaryotic RPC9 RNA polymerase subunit family. Component of the RNA polymerase III (Pol III) complex.

The protein resides in the cytoplasm. It is found in the nucleus. Its function is as follows. DNA-dependent RNA polymerase catalyzes the transcription of DNA into RNA using the four ribonucleoside triphosphates as substrates. Specific peripheric component of RNA polymerase III which synthesizes small RNAs, such as 5S rRNA and tRNAs. The chain is DNA-directed RNA polymerase III subunit rpc9 (rpc17) from Schizosaccharomyces pombe (strain 972 / ATCC 24843) (Fission yeast).